The chain runs to 1420 residues: MANLPIIGIYKVLYSYEPQEINPGEEIPENEREISIVEDEIVCLLEKGEDDWYLVKRNVNSNDDDEEIGIVPSNYITEAEPSTKMKALYDYTQQSVDEISFQADQTLDCYGDTDSDWILVGFNNNFGLAPRNYVEGMDASSAPASQEPSASGVNAPTVSAPNSMVSPPPSFQPPSAAAPATSLPSDYNPPPPPPPPPAVEDQAADANEPDDYYSSGRAVSPEIPPTYTPKQADPLPAPPPPPPPTLPPQSTNTSQLPMPSRNVNNLGSQVNIPPPPATPSQPPRPPTNASTRSTGTSSSMAHSYDSPPSPSSPSDAYGDPNQHLKLRTDSHDDSRAYDSSSSMGNPAYEKWEVREVVGKKKKRTGILAINNKSIVLTFTKTMDAAQVWPVTDLVNYSSERKHVFIEFNSDSGITSLHLHASSNTNADNIIRALGDVAGSARAAGLREIAAASGSPMPKLPSDSALHRLNAASDAAGVNGGRTGDYEMSTVYGDRSARAEDHKPKDSSAGQKMGTVLYDFIAEAADELTVKANMRVVIVNDTASSDWWKCSVDGKEGVVPSNFIKPDTEGDAKSPPSSSKSGQGSSLSRRASKHESKHKRDSKHEARPESKHESHRESKSAEKDKKDKKDKKEDSKRSRSHSVSKPDSSKLRTWTDRTGAFKVEAEFLGYSDDKIHLHKTNGVKISVPSAKMSYKDLDYVELMTGKKVYSRTERKKDTQKQSHDHGHSHSKSHDREKEKEKKKDREHRKHRETEEEDEGPPPQPARPESTRPALAPPSSSHSNDKYDVIQERPKISYDWFDFFLRCGVDFTVCNRYTHNFNNEHLDEACIPSLNPDTLRTLGLKEGDIIRVMNHVNELNGVSTKPASAITPETKSTVNQIMSGGEALAAPVAVPAPIPAPVAEPAPPAAPAKEVVEKAPSPPATRPKSTTPQKFDDDAWANKPVTEPPVRASSVTVEPARVTESMNKMNISEEAKKPEAPSRPRTAPIPEPEEQKKAPVEKKDAEKSVQAPIPAQPTGNITIQNAYFTAPQPMAADPFQSPLYVQPTGFQPPPSALPIQPTGYMQPIPVQATGYQPLMVQPTGLQPHMTGVMPQVTGVMPQMTGVVPQMTGVMPQMTGVQVQKTGAMPQQPVNYGYQVAGMQPQATGIISQPTGIRAQATGIMTQPTGLHTQATGMMQPTGMQPQATGIMPQATGMMQPTGMQPQVTGIMPQSMPMQPQMTGVQVQKTGMVAQPMLSQYTGYQQNYTPTAMPAADGYGMQPSMNDTQAYYNMNAQTPVNYGFAGGQDTSFGYEQQQMYSPMQQQQQQYYGTEMQPDMGYQQPMMSNYYDPMQMQQQTPYGYNQTGMEGYSEYGYAQPAGNMANPMSYDPVSNASLYMPSDYNQQTQPANYYDSSFGGAQGANEAGKKASIYQATPDNPFGF.

SH3 domains are found at residues 5-81 (PIIG…EAEP) and 82-139 (STKM…GMDA). The disordered stretch occupies residues 138-344 (DASSAPASQE…RAYDSSSSMG (207 aa)). Residues 139 to 151 (ASSAPASQEPSAS) are compositionally biased toward low complexity. The span at 152–165 (GVNAPTVSAPNSMV) shows a compositional bias: polar residues. The span at 173–185 (PPSAAAPATSLPS) shows a compositional bias: low complexity. Composition is skewed to pro residues over residues 187-198 (YNPPPPPPPPPA) and 235-247 (LPAP…PTLP). Positions 250 to 271 (STNTSQLPMPSRNVNNLGSQVN) are enriched in polar residues. Residues 272 to 286 (IPPPPATPSQPPRPP) are compositionally biased toward pro residues. Polar residues predominate over residues 287–301 (TNASTRSTGTSSSMA). Residues serine 309, serine 311, and serine 312 each carry the phosphoserine modification. Over residues 326–336 (LRTDSHDDSRA) the composition is skewed to basic and acidic residues. Position 454 is a phosphoserine (serine 454). One can recognise an SH3 3 domain in the interval 508–568 (AGQKMGTVLY…PSNFIKPDTE (61 aa)). Disordered regions lie at residues 560–657 (SNFI…TDRT), 708–786 (YSRT…DKYD), and 902–1016 (EPAP…AQPT). Residues 572–587 (KSPPSSSKSGQGSSLS) are compositionally biased toward low complexity. 2 positions are modified to phosphoserine: serine 573 and serine 577. A compositionally biased stretch (basic residues) spans 589-600 (RASKHESKHKRD). Basic and acidic residues-rich tracts occupy residues 601–636 (SKHE…DSKR) and 709–742 (SRTE…EKKK). A Phosphoserine modification is found at serine 927. Position 929 is a phosphothreonine (threonine 929). Basic and acidic residues-rich tracts occupy residues 969–980 (ISEEAKKPEAPS) and 991–1005 (EEQK…DAEK).

It belongs to the SLA1 family. In terms of assembly, component of the PAN1 actin cytoskeleton-regulatory complex.

It is found in the cell membrane. It localises to the endosome membrane. Its subcellular location is the cytoplasm. The protein resides in the cytoskeleton. The protein localises to the actin patch. Its function is as follows. Component of the PAN1 actin cytoskeleton-regulatory complex required for the internalization of endosomes during actin-coupled endocytosis. The complex links the site of endocytosis to the cell membrane-associated actin cytoskeleton. Mediates uptake of external molecules and vacuolar degradation of plasma membrane proteins. Plays a role in the proper organization of the cell membrane-associated actin cytoskeleton and promotes its destabilization. The chain is Actin cytoskeleton-regulatory complex protein sla1 (sla1) from Schizosaccharomyces pombe (strain 972 / ATCC 24843) (Fission yeast).